Reading from the N-terminus, the 128-residue chain is Cyclin-dependent protein kinase inhibitor SMR1 (128 aa).

Positions 17 to 74 (PIKIRSKTSKTKKDEGDDDEDDLRCSTPTSQEHKIPAVVDSPPPPPRKPRPPPSAPSA) are disordered. Over residues 57 to 71 (SPPPPPRKPRPPPSA) the composition is skewed to pro residues.

In terms of assembly, interacts with CDKB1-1. Interacts with CPR5. Expressed in roots, leaves, stems, siliques and flowers. Expressed in the root elongation zone.

The protein localises to the nucleus. In terms of biological role, probable cyclin-dependent protein kinase (CDK) inhibitor that functions as a repressor of mitosis in the endoreduplication cell cycle. Cooperates with SIM and SMR2 to promote endoreplication during leaf development. Specifically regulates endoreduplication in epidermal pavement cells to produce the cell size pattern. Is necessary for giant cell formation. Positive regulator of effector-triggered immunity (ETI). This is Cyclin-dependent protein kinase inhibitor SMR1 from Arabidopsis thaliana (Mouse-ear cress).